Reading from the N-terminus, the 329-residue chain is tRNA pseudouridine synthase B (329 aa).

Asp-42 functions as the Nucleophile in the catalytic mechanism.

Belongs to the pseudouridine synthase TruB family. Type 1 subfamily.

The enzyme catalyses uridine(55) in tRNA = pseudouridine(55) in tRNA. Functionally, responsible for synthesis of pseudouridine from uracil-55 in the psi GC loop of transfer RNAs. The polypeptide is tRNA pseudouridine synthase B (Lactococcus lactis subsp. lactis (strain IL1403) (Streptococcus lactis)).